The chain runs to 88 residues: Small ribosomal subunit protein bS20 (88 aa).

Over residues M1 to R16 the composition is skewed to basic residues. The segment at M1–V20 is disordered.

The protein belongs to the bacterial ribosomal protein bS20 family.

In terms of biological role, binds directly to 16S ribosomal RNA. The chain is Small ribosomal subunit protein bS20 from Nitrobacter hamburgensis (strain DSM 10229 / NCIMB 13809 / X14).